We begin with the raw amino-acid sequence, 304 residues long: Aspartate carbamoyltransferase catalytic subunit (304 aa).

The carbamoyl phosphate site is built by Arg-49 and Thr-50. An L-aspartate-binding site is contributed by Lys-77. Carbamoyl phosphate is bound by residues Arg-99, His-127, and Gln-130. Arg-160 and Arg-211 together coordinate L-aspartate. Ala-252 and Pro-253 together coordinate carbamoyl phosphate.

Belongs to the aspartate/ornithine carbamoyltransferase superfamily. ATCase family. As to quaternary structure, heterododecamer (2C3:3R2) of six catalytic PyrB chains organized as two trimers (C3), and six regulatory PyrI chains organized as three dimers (R2).

The catalysed reaction is carbamoyl phosphate + L-aspartate = N-carbamoyl-L-aspartate + phosphate + H(+). Its pathway is pyrimidine metabolism; UMP biosynthesis via de novo pathway; (S)-dihydroorotate from bicarbonate: step 2/3. Catalyzes the condensation of carbamoyl phosphate and aspartate to form carbamoyl aspartate and inorganic phosphate, the committed step in the de novo pyrimidine nucleotide biosynthesis pathway. The protein is Aspartate carbamoyltransferase catalytic subunit of Bacillus mycoides (strain KBAB4) (Bacillus weihenstephanensis).